Here is a 435-residue protein sequence, read N- to C-terminus: rRNA methyltransferase 3A, mitochondrial (435 aa).

Residues 1–42 (MAALMYNVSRGLVMLGERSLFQRERYQILVNSRRFLRGLRRR) constitute a mitochondrion transit peptide. A compositionally biased stretch (polar residues) spans 314 to 324 (KQLVSGQTENV). Residues 314 to 351 (KQLVSGQTENVSSDDYSESDSDDDDDEEEDEDSLPHVK) form a disordered region. The segment covering 328-345 (DYSESDSDDDDDEEEDED) has biased composition (acidic residues). Positions 369 and 402 each coordinate S-adenosyl-L-methionine.

This sequence belongs to the class IV-like SAM-binding methyltransferase superfamily. RNA methyltransferase TrmH family.

The protein localises to the mitochondrion. The enzyme catalyses a uridine in rRNA + S-adenosyl-L-methionine = a 2'-O-methyluridine in rRNA + S-adenosyl-L-homocysteine + H(+). S-adenosyl-L-methionine-dependent 2'-O-ribose methyltransferase that catalyzes the formation of 2'-O-methylguanosine at position 1485 (Gm1485) in the mitochondrial large subunit ribosomal RNA (mtLSU rRNA), a conserved modification in the peptidyl transferase domain of the mtLSU rRNA. Also required for formation of 2'-O-methyluridine at position 1484 (Um1484) mediated by MRM2. The polypeptide is rRNA methyltransferase 3A, mitochondrial (mrm3a) (Danio rerio (Zebrafish)).